Reading from the N-terminus, the 179-residue chain is ADP-ribosylation factor-like protein 5A (179 aa).

Glycine 2 is lipidated: N-myristoyl glycine. GTP-binding positions include 23-30 (GLDNAGKT), 66-70 (DIGGQ), 125-128 (NKQD), and alanine 159.

It belongs to the small GTPase superfamily. Arf family.

Functionally, lacks ADP-ribosylation enhancing activity. The chain is ADP-ribosylation factor-like protein 5A (ARL5A) from Homo sapiens (Human).